The following is a 439-amino-acid chain: Serine--tRNA ligase (439 aa).

247-249 (TSE) lines the L-serine pocket. 278–280 (RSE) serves as a coordination point for ATP. Glu301 serves as a coordination point for L-serine. 365–368 (EISS) provides a ligand contact to ATP. Ser400 contributes to the L-serine binding site.

Belongs to the class-II aminoacyl-tRNA synthetase family. Type-1 seryl-tRNA synthetase subfamily. As to quaternary structure, homodimer. The tRNA molecule binds across the dimer.

The protein localises to the cytoplasm. It carries out the reaction tRNA(Ser) + L-serine + ATP = L-seryl-tRNA(Ser) + AMP + diphosphate + H(+). The catalysed reaction is tRNA(Sec) + L-serine + ATP = L-seryl-tRNA(Sec) + AMP + diphosphate + H(+). The protein operates within aminoacyl-tRNA biosynthesis; selenocysteinyl-tRNA(Sec) biosynthesis; L-seryl-tRNA(Sec) from L-serine and tRNA(Sec): step 1/1. Its function is as follows. Catalyzes the attachment of serine to tRNA(Ser). Is also able to aminoacylate tRNA(Sec) with serine, to form the misacylated tRNA L-seryl-tRNA(Sec), which will be further converted into selenocysteinyl-tRNA(Sec). This Paracidovorax citrulli (strain AAC00-1) (Acidovorax citrulli) protein is Serine--tRNA ligase.